Consider the following 100-residue polypeptide: Small ribosomal subunit protein uS14c (100 aa).

The protein belongs to the universal ribosomal protein uS14 family. In terms of assembly, part of the 30S ribosomal subunit.

The protein localises to the plastid. Its subcellular location is the chloroplast. In terms of biological role, binds 16S rRNA, required for the assembly of 30S particles. The sequence is that of Small ribosomal subunit protein uS14c from Chlorella vulgaris (Green alga).